The following is a 342-amino-acid chain: Prenyl transferase ptmC (342 aa).

A helical transmembrane segment spans residues 17–37 (LSFLTLTVGALALIVVLYISI). His-110 serves as a coordination point for isopentenyl diphosphate. Residues Asp-117 and Asp-121 each coordinate Mg(2+). Dimethylallyl diphosphate is bound at residue Arg-126. Asn-154 is a glycosylation site (N-linked (GlcNAc...) asparagine). The dimethylallyl diphosphate site is built by Lys-210, Thr-211, Gln-240, Asn-247, and Lys-257.

This sequence belongs to the FPP/GGPP synthase family.

Its subcellular location is the membrane. Its pathway is secondary metabolite biosynthesis. Its function is as follows. Prenyl transferase; part of the gene cluster that mediates the biosynthesis of the indole diterpenes penitrems. The geranylgeranyl diphosphate (GGPP) synthase ptmG catalyzes the first step in penitrem biosynthesis via conversion of farnesyl pyrophosphate and isopentyl pyrophosphate into geranylgeranyl pyrophosphate (GGPP). Condensation of indole-3-glycerol phosphate with GGPP by the prenyl transferase ptmC then forms 3-geranylgeranylindole (3-GGI). Epoxidation by the FAD-dependent monooxygenase ptmM leads to a epoxidized-GGI that is substrate of the terpene cyclase ptmB for cyclization to yield paspaline. Paspaline is subsequently converted to 13-desoxypaxilline by the cytochrome P450 monooxygenase ptmP, the latter being then converted to paxilline by the cytochrome P450 monooxygenase ptmQ. Paxilline is converted to beta-paxitriol via C-10 ketoreduction by the short-chain dehydrogenase ptmH which can be monoprenylated at the C-20 by the indole diterpene prenyltransferase ptmD. A two-step elimination (acetylation and elimination) process performed by the O-acetyltransferase ptmV and ptmI leads to the production of the prenylated form of penijanthine. The FAD-linked oxidoreductase ptmO then converts the prenylated form of penijanthine into PC-M5 which is in turn transformed into PC-M4 by the aromatic dimethylallyltransferase ptmE. Five sequential oxidative transformations performed by the cytochrome P450 monooxygenases ptmK, ptmU, ptmL, ptmN and ptmJ yield the various penitrem compounds. PtmK, ptmU and ptmM are involved in the formation of the key bicyclic ring of penitrem C via the formation of the intermediates secopenitrem D and penitrem D. PtmL catalyzes the epoxidation of penitrem D and C to yield penitrem B and F, respectively. PtmJ catalyzes the last benzylic hydroxylation to convert penitrem B to prenitrem E and penitrem F to penitrem A. The polypeptide is Prenyl transferase ptmC (Penicillium ochrochloron).